Consider the following 110-residue polypeptide: uncharacterized protein (110 aa).

This is an uncharacterized protein from Acidianus convivator (ABV).